The chain runs to 108 residues: Putative membrane protein insertion efficiency factor (108 aa).

This sequence belongs to the UPF0161 family.

The protein resides in the cell inner membrane. Functionally, could be involved in insertion of integral membrane proteins into the membrane. The polypeptide is Putative membrane protein insertion efficiency factor (Chelativorans sp. (strain BNC1)).